The chain runs to 330 residues: Cathepsin S (330 aa).

The first 17 residues, 1–17, serve as a signal peptide directing secretion; the sequence is MAVLGAPGVLCDNGATA. Residues 18–112 constitute a propeptide, activation peptide; it reads ERPTLDHHWD…GTLKSSSNQT (95 aa). Asn-100 and Asn-110 each carry an N-linked (GlcNAc...) asparagine glycan. Intrachain disulfides connect Cys-124–Cys-222, Cys-134–Cys-179, Cys-168–Cys-211, and Cys-271–Cys-319. Residue Cys-137 is part of the active site. Residues His-277 and Asn-297 contribute to the active site.

This sequence belongs to the peptidase C1 family. As to quaternary structure, monomer. In terms of tissue distribution, highest levels occur in the ileum followed by spleen, brain, thyroid, ovary and uterus. Low levels are found in the liver, kidney, jejunum and lung with lowest levels in the heart.

It localises to the lysosome. It is found in the secreted. Its subcellular location is the cytoplasmic vesicle. The protein resides in the phagosome. The enzyme catalyses Similar to cathepsin L, but with much less activity on Z-Phe-Arg-|-NHMec, and more activity on the Z-Val-Val-Arg-|-Xaa compound.. Functionally, thiol protease. Key protease responsible for the removal of the invariant chain from MHC class II molecules and MHC class II antigen presentation. The bond-specificity of this proteinase is in part similar to the specificities of cathepsin L. In Rattus norvegicus (Rat), this protein is Cathepsin S (Ctss).